The primary structure comprises 159 residues: Major allergen Pyr c 1 (159 aa).

The protein belongs to the BetVI family.

In Pyrus communis (Pear), this protein is Major allergen Pyr c 1 (PYRC1).